Here is a 274-residue protein sequence, read N- to C-terminus: Exosome complex component RRP40 (274 aa).

Residue Ala2 is modified to N-acetylalanine. Lys150 participates in a covalent cross-link: Glycyl lysine isopeptide (Lys-Gly) (interchain with G-Cter in SUMO2).

This sequence belongs to the RRP40 family. In terms of assembly, component of the RNA exosome core complex (Exo-9), composed of EXOSC1, EXOSC2, EXOSC3, EXOSC4, EXOSC5, EXOSC6, EXOSC7, EXOSC8 and EXOSC9; within the complex interacts with EXOSC5 and EXOSC9. The catalytically inactive RNA exosome core complex (Exo-9) associates with the catalytic subunit EXOSC10/RRP6. Exo-9 may associate with DIS3 to form the nucleolar exosome complex, or DIS3L to form the cytoplasmic exosome complex. Exo-9 is formed by a hexameric base ring consisting of the heterodimers EXOSC4-EXOSC9, EXOSC5-EXOSC8 and EXOSC6-EXOSC7, and a cap ring consisting of EXOSC1, EXOSC2 and EXOSC3. The RNA exosome complex associates with cofactors C1D/RRP47, MPHOSPH6/MPP6 and MTREX/MTR4. Interacts with MPHOSPH6/MPP6; the interaction is direct. Interacts with GTPBP1. Interacts with ZC3HAV1. Interacts with DDX17 only in the presence of ZC3HAV1 in an RNA-independent manner. Interacts with DHX36; this interaction occurs in a RNase-insensitive manner. Interacts with HBS1L isoform 2.

It localises to the cytoplasm. The protein localises to the nucleus. Its subcellular location is the nucleolus. Functionally, non-catalytic component of the RNA exosome complex which has 3'-&gt;5' exoribonuclease activity and participates in a multitude of cellular RNA processing and degradation events. In the nucleus, the RNA exosome complex is involved in proper maturation of stable RNA species such as rRNA, snRNA and snoRNA, in the elimination of RNA processing by-products and non-coding 'pervasive' transcripts, such as antisense RNA species and promoter-upstream transcripts (PROMPTs), and of mRNAs with processing defects, thereby limiting or excluding their export to the cytoplasm. The RNA exosome may be involved in Ig class switch recombination (CSR) and/or Ig variable region somatic hypermutation (SHM) by targeting AICDA deamination activity to transcribed dsDNA substrates. In the cytoplasm, the RNA exosome complex is involved in general mRNA turnover and specifically degrades inherently unstable mRNAs containing AU-rich elements (AREs) within their 3' untranslated regions, and in RNA surveillance pathways, preventing translation of aberrant mRNAs. It seems to be involved in degradation of histone mRNA. The catalytic inactive RNA exosome core complex of 9 subunits (Exo-9) is proposed to play a pivotal role in the binding and presentation of RNA for ribonucleolysis, and to serve as a scaffold for the association with catalytic subunits and accessory proteins or complexes. EXOSC3 as peripheral part of the Exo-9 complex stabilizes the hexameric ring of RNase PH-domain subunits through contacts with EXOSC9 and EXOSC5. This Mus musculus (Mouse) protein is Exosome complex component RRP40 (Exosc3).